The following is a 1089-amino-acid chain: GPI ethanolamine phosphate transferase 3, catalytic subunit (1089 aa).

A helical membrane pass occupies residues 4 to 24 (ASVLLFLAWVCFLFYAGIALF). An N-linked (GlcNAc...) asparagine glycan is attached at Asn268. Helical transmembrane passes span 457–477 (LLAA…SPGF), 482–502 (LLLT…GLLG), 510–530 (LVLL…WKAW), 541–561 (TLFP…AVFF), 575–595 (FLLG…GQLL), 668–688 (LWYG…RLWL), 701–721 (MLFV…YWAL), 747–767 (VAGL…TVLV), 830–850 (SVYS…LLLL), 857–877 (LVFL…AAGI), 944–964 (FASH…PFLC), 1014–1034 (LKYL…ASIL), and 1048–1068 (FIFE…GIAL).

The protein belongs to the PIGG/PIGN/PIGO family. PIGO subfamily. As to quaternary structure, part of the ethanolamine phosphate transferase 3 complex composed by PIGO and PIGF. PIGF is required to stabilize PIGO.

Its subcellular location is the endoplasmic reticulum membrane. Its pathway is glycolipid biosynthesis; glycosylphosphatidylinositol-anchor biosynthesis. Catalytic subunit of the ethanolamine phosphate transferase 3 complex that transfers an ethanolamine phosphate (EtNP) from a phosphatidylethanolamine (PE) to the 6-OH position of the third alpha-1,2-linked mannose of an alpha-D-Man-(1-&gt;2)-alpha-D-Man-(1-&gt;6)-2-PEtn-alpha-D-Man-(1-&gt;4)-alpha-D-GlcN-(1-&gt;6)-(1-radyl,2-acyl-sn-glycero-3-phospho)-2-acyl-inositol (also termed H6) intermediate to generate a 6-PEtn-alpha-D-Man-(1-&gt;2)-alpha-D-Man-(1-&gt;6)-2-PEtn-alpha-D-Man-(1-&gt;4)-alpha-D-GlcN-(1-&gt;6)-(1-radyl,2-acyl-sn-glycero-3-phospho)-2-acyl-inositol (also termed H7) and participates in the tenth step of the glycosylphosphatidylinositol-anchor biosynthesis. The chain is GPI ethanolamine phosphate transferase 3, catalytic subunit from Homo sapiens (Human).